Consider the following 454-residue polypeptide: Maintenance of mitochondrial morphology protein 1 (454 aa).

At 1-117 the chain is on the lumenal side; the sequence is MESNYTGMDG…SFSSWSFAQG (117 aa). A helical membrane pass occupies residues 118 to 138; that stretch reads LIVGQVSVVLVLIFFIKFFIF. The Cytoplasmic segment spans residues 139–454; that stretch reads SDSSTKTNPN…ESEPGRETHY (316 aa). The tract at residues 144 to 164 is disordered; sequence KTNPNPAKNSSSTNSLSGLSS. A compositionally biased stretch (low complexity) spans 153–164; it reads SSSTNSLSGLSS. Residues 215–427 enclose the SMP-LTD domain; the sequence is PAESLDWFNV…EPRFQFIKLP (213 aa). Residues Arg-253, Trp-411, Arg-415, Trp-430, Arg-432, and Ser-433 each contribute to the a 1,2-diacyl-sn-glycero-3-phosphate site. The segment at 434 to 454 is disordered; it reads KNTREGKADVDESEPGRETHY. Over residues 435–454 the composition is skewed to basic and acidic residues; the sequence is NTREGKADVDESEPGRETHY.

Belongs to the MMM1 family. Homodimer. Component of the ER-mitochondria encounter structure (ERMES) or MDM complex, composed of MMM1, MDM10, MDM12 and MDM34. An MMM1 homodimer associates with one molecule of MDM12 on each side in a pairwise head-to-tail manner, and the SMP-LTD domains of MMM1 and MDM12 generate a continuous hydrophobic tunnel for phospholipid trafficking.

The protein resides in the endoplasmic reticulum membrane. Functionally, component of the ERMES/MDM complex, which serves as a molecular tether to connect the endoplasmic reticulum (ER) and mitochondria. Components of this complex are involved in the control of mitochondrial shape and protein biogenesis, and function in nonvesicular lipid trafficking between the ER and mitochondria. Preferentially binds to glycerophospholipids such as phosphatidylcholoine (PC), phosphatidic acid (PA), phosphatidylglycerol (PG), and phosphatidylserine (PS), but not to phosphatidylethanolamine (PE). The MDM12-MMM1 subcomplex functions in the major beta-barrel assembly pathway that is responsible for biogenesis of all outer membrane beta-barrel proteins, and acts in a late step after the SAM complex. The MDM10-MDM12-MMM1 subcomplex further acts in the TOM40-specific pathway after the action of the MDM12-MMM1 complex. Essential for establishing and maintaining the structure of mitochondria and maintenance of mtDNA nucleoids. The protein is Maintenance of mitochondrial morphology protein 1 of Zygosaccharomyces rouxii (strain ATCC 2623 / CBS 732 / NBRC 1130 / NCYC 568 / NRRL Y-229).